Here is a 243-residue protein sequence, read N- to C-terminus: Small ribosomal subunit protein uS3 (243 aa).

Residues 39-107 (IRAYLIKELK…ETHLNIVEVR (69 aa)) form the KH type-2 domain. Residues 214–243 (ASERRGLEGDAQGPASRERGDRPDRRRENA) are disordered. Residues 229-243 (SRERGDRPDRRRENA) are compositionally biased toward basic and acidic residues.

The protein belongs to the universal ribosomal protein uS3 family. Part of the 30S ribosomal subunit. Forms a tight complex with proteins S10 and S14.

Binds the lower part of the 30S subunit head. Binds mRNA in the 70S ribosome, positioning it for translation. The protein is Small ribosomal subunit protein uS3 of Agrobacterium fabrum (strain C58 / ATCC 33970) (Agrobacterium tumefaciens (strain C58)).